Here is a 353-residue protein sequence, read N- to C-terminus: Heat-inducible transcription repressor HrcA (353 aa).

The protein belongs to the HrcA family.

Negative regulator of class I heat shock genes (grpE-dnaK-dnaJ and groELS operons). Prevents heat-shock induction of these operons. The protein is Heat-inducible transcription repressor HrcA of Anaeromyxobacter dehalogenans (strain 2CP-1 / ATCC BAA-258).